A 412-amino-acid chain; its full sequence is Isocitrate dehydrogenase [NADP] cytoplasmic (412 aa).

NADP(+) is bound by residues 75–77 (TIT) and Arg82. Residue Thr77 coordinates substrate. Residues 94–100 (SPNGTIR), Arg109, and Arg132 each bind substrate. Asp252 contributes to the Mn(2+) binding site. Residue Lys260 participates in NADP(+) binding. Residue Asp275 participates in Mn(2+) binding. Residues 310-315 (GTVTRH) and Asn328 contribute to the NADP(+) site.

It belongs to the isocitrate and isopropylmalate dehydrogenases family. Homodimer. Mg(2+) serves as cofactor. Requires Mn(2+) as cofactor. Post-translationally, the N-terminus is blocked.

The protein localises to the cytoplasm. It carries out the reaction D-threo-isocitrate + NADP(+) = 2-oxoglutarate + CO2 + NADPH. By catabolite repression. Its function is as follows. May function in the production of NADPH for fatty acid and sterol synthesis. This Saccharomyces cerevisiae (strain ATCC 204508 / S288c) (Baker's yeast) protein is Isocitrate dehydrogenase [NADP] cytoplasmic (IDP2).